The chain runs to 141 residues: ATP synthase epsilon chain (141 aa).

The protein belongs to the ATPase epsilon chain family. In terms of assembly, F-type ATPases have 2 components, CF(1) - the catalytic core - and CF(0) - the membrane proton channel. CF(1) has five subunits: alpha(3), beta(3), gamma(1), delta(1), epsilon(1). CF(0) has three main subunits: a, b and c.

The protein localises to the cell inner membrane. In terms of biological role, produces ATP from ADP in the presence of a proton gradient across the membrane. In Gluconacetobacter diazotrophicus (strain ATCC 49037 / DSM 5601 / CCUG 37298 / CIP 103539 / LMG 7603 / PAl5), this protein is ATP synthase epsilon chain.